A 557-amino-acid polypeptide reads, in one-letter code: Organic cation/carnitine transporter 2 (557 aa).

The Cytoplasmic segment spans residues 1–20; that stretch reads MRDYDEVTAFLGEWGPFQRL. The helical transmembrane segment at 21–41 threads the bilayer; sequence IFFLLSASIIPNGFNGMSIVF. Residues 42 to 142 are Extracellular-facing; that stretch reads LAGTPEHRCL…DLVCKDDWKA (101 aa). N-linked (GlcNAc...) asparagine glycosylation is found at Asn57, Asn64, and Asn91. A helical membrane pass occupies residues 143–163; it reads PLTTSLFFVGVLMGSFISGQL. Residues 164–172 are Cytoplasmic-facing; that stretch reads SDRFGRKNV. A helical membrane pass occupies residues 173 to 193; it reads LFLTMGMQTGFSFLQLFSVNF. The Extracellular portion of the chain corresponds to 194-197; the sequence is EMFT. A helical membrane pass occupies residues 198–218; sequence VLFVLVGMGQISNYVAAFVLG. 218 to 225 provides a ligand contact to ATP; sequence GTEILSKS. The Cytoplasmic segment spans residues 219–232; that stretch reads TEILSKSIRIIFAT. A helical membrane pass occupies residues 233–253; sequence LGVCIFYAFGFMVLPLFAYFI. Residues 254-257 are Extracellular-facing; sequence RDWR. Residues 258-278 traverse the membrane as a helical segment; sequence MLLLALTVPGVLCGALWWFIP. Residues 279–341 are Cytoplasmic-facing; that stretch reads ESPRWLISQG…YDLVRTRNIR (63 aa). A helical transmembrane segment spans residues 342-362; sequence IITIMSIILWLTISVGYFGLS. Topologically, residues 363-373 are extracellular; the sequence is LDTPNLHGDIY. The chain crosses the membrane as a helical span at residues 374-394; the sequence is VNCFLLAAVEVPAYVLAWLLL. Residues 395-406 are Cytoplasmic-facing; it reads QHLPRRYSISAA. The chain crosses the membrane as a helical span at residues 407–427; that stretch reads LFLGGSVLLFIQLVPSELFYL. Over 428–430 the chain is Extracellular; sequence STA. The helical transmembrane segment at 431–451 threads the bilayer; it reads LVMVGKFGITSAYSMVYVYTA. At 452–462 the chain is on the cytoplasmic side; that stretch reads ELYPTVVRNMG. A helical membrane pass occupies residues 463-483; it reads VGVSSTASRLGSILSPYFVYL. Topologically, residues 484–488 are extracellular; the sequence is GAYDR. Tyr486 bears the Phosphotyrosine mark. A helical membrane pass occupies residues 489 to 509; that stretch reads FLPYILMGSLTILTAILTLFF. Topologically, residues 510–557 are cytoplasmic; the sequence is PESFGAPLPDTIDQMLRVKGIKQWQIQSQTRTQKDGGESPTVLKSTAF. The tract at residues 537–557 is disordered; sequence SQTRTQKDGGESPTVLKSTAF. Position 548 is a phosphoserine (Ser548). Residue Thr550 is modified to Phosphothreonine.

This sequence belongs to the major facilitator (TC 2.A.1) superfamily. Organic cation transporter (TC 2.A.1.19) family. As to quaternary structure, interacts with PDZK1. In terms of tissue distribution, expressed in the proximal and distal tubules and in the glomeruli in the kidney, in the myocardium, valves, and arterioles in the heart, in the labyrinthine layer of the placenta, and in the cortex, hippocampus, and cerebellum in the brain. Expressed in Sertoli cells in testis.

The protein localises to the cell membrane. Its subcellular location is the apical cell membrane. It is found in the basal cell membrane. It catalyses the reaction (R)-carnitine(out) + Na(+)(out) = (R)-carnitine(in) + Na(+)(in). The enzyme catalyses O-acetyl-(R)-carnitine(out) + Na(+)(out) = O-acetyl-(R)-carnitine(in) + Na(+)(in). The catalysed reaction is O-propanoyl-(R)-carnitine(out) + Na(+)(out) = O-propanoyl-(R)-carnitine(in) + Na(+)(in). It carries out the reaction glycine betaine(out) + Na(+)(out) = glycine betaine(in) + Na(+)(in). It catalyses the reaction glycine betaine(out) + (R)-carnitine(in) = glycine betaine(in) + (R)-carnitine(out). The enzyme catalyses O-butanoyl-(R)-carnitine(out) + Na(+)(out) = O-butanoyl-(R)-carnitine(in) + Na(+)(in). The catalysed reaction is (S)-carnitine(out) + Na(+)(out) = (S)-carnitine(in) + Na(+)(in). It carries out the reaction an O-acyl-(R)-carnitine(out) + Na(+)(out) = an O-acyl-(R)-carnitine(in) + Na(+)(in). It catalyses the reaction L-glutamyl-L-arginyl-glycyl-L-methionyl-L-threonine(out) + Na(+)(out) = L-glutamyl-L-arginyl-glycyl-L-methionyl-L-threonine(in) + Na(+)(in). The enzyme catalyses N,N-dimethylglycine(out) + Na(+)(out) = N,N-dimethylglycine(in) + Na(+)(in). Inhibited by emetine, quinidine and verapamil. The IC(50) of emetine is 4.2 uM. Not inhibited by valproic acid. Transport of (R)-carnitine is stimulated by cholesterol in the plasma membrane. In terms of biological role, sodium-ion dependent, high affinity carnitine transporter. Involved in the active cellular uptake of carnitine. Transports one sodium ion with one molecule of carnitine. Also transports organic cations such as tetraethylammonium (TEA) without the involvement of sodium. Also relative uptake activity ratio of carnitine to TEA is 11.3. May also contribute to regulate the transport of organic compounds in testis across the blood-testis-barrier. This chain is Organic cation/carnitine transporter 2 (Slc22a5), found in Rattus norvegicus (Rat).